We begin with the raw amino-acid sequence, 130 residues long: Small ribosomal subunit protein uS9 (130 aa).

Belongs to the universal ribosomal protein uS9 family.

The sequence is that of Small ribosomal subunit protein uS9 from Paraburkholderia phymatum (strain DSM 17167 / CIP 108236 / LMG 21445 / STM815) (Burkholderia phymatum).